Reading from the N-terminus, the 179-residue chain is Large ribosomal subunit protein uL5 (179 aa).

It belongs to the universal ribosomal protein uL5 family. Part of the 50S ribosomal subunit; part of the 5S rRNA/L5/L18/L25 subcomplex. Contacts the 5S rRNA and the P site tRNA. Forms a bridge to the 30S subunit in the 70S ribosome.

This is one of the proteins that bind and probably mediate the attachment of the 5S RNA into the large ribosomal subunit, where it forms part of the central protuberance. In the 70S ribosome it contacts protein S13 of the 30S subunit (bridge B1b), connecting the 2 subunits; this bridge is implicated in subunit movement. Contacts the P site tRNA; the 5S rRNA and some of its associated proteins might help stabilize positioning of ribosome-bound tRNAs. This Xylella fastidiosa (strain M12) protein is Large ribosomal subunit protein uL5.